A 352-amino-acid polypeptide reads, in one-letter code: Respiratory nitrate reductase subunit beta (352 aa).

Residues 20–48 form the 4Fe-4S ferredoxin-type 1 domain; it reads VAMVMDLNKCIGCQTCTVACKSLWTEGGG. Residues cysteine 29, cysteine 32, cysteine 35, and cysteine 39 each contribute to the [4Fe-4S] cluster site. 2 disordered regions span residues 63–95 and 111–131; these read KGYPRNWEESGGGWKSSEHKERKPGQIPDKEDY and SDRPLRPDSDPEWGPNWDEDQ. The segment covering 78–95 has biased composition (basic and acidic residues); the sequence is SSEHKERKPGQIPDKEDY. 4Fe-4S ferredoxin-type domains follow at residues 139–170 and 172–201; these read SYYFYLPRICNHCTHPSCVEACPRKAIYKREE and GIVLIDQERCRGYRYCVEGCPYKKVYYNAT. Residues cysteine 148, cysteine 151, and cysteine 156 each contribute to the [4Fe-4S] cluster site. 3 residues coordinate [3Fe-4S] cluster: cysteine 160, cysteine 181, and cysteine 187. Cysteine 191, cysteine 208, cysteine 211, cysteine 229, and cysteine 233 together coordinate [4Fe-4S] cluster.

Probable multiprotein complex; a catalytic heterodimer of an alpha and beta chain is proposed to associate with additional subunits involved in membrane attachment and electron transfer. It depends on [4Fe-4S] cluster as a cofactor. Requires [3Fe-4S] cluster as cofactor.

The protein localises to the cell membrane. It carries out the reaction nitrate + a quinol = a quinone + nitrite + H2O. With respect to regulation, inhibited by cyanide, azide and antimycin A. Enzyme stability is not dependent on salt concentration. Functionally, the respiratory membrane-bound nitrate reductase enzyme complex plays a role in generation of metabolic energy by using nitrate as a terminal electron acceptor during anaerobic conditions. The beta chain is an electron transfer unit containing four cysteine clusters involved in the formation of iron-sulfur centers. In Haloferax mediterranei (strain ATCC 33500 / DSM 1411 / JCM 8866 / NBRC 14739 / NCIMB 2177 / R-4) (Halobacterium mediterranei), this protein is Respiratory nitrate reductase subunit beta (narH).